Consider the following 392-residue polypeptide: MTLLGTALRPAATRVMLLGSGELGKEVAIECQRLGVEVIAVDRYADAPAMHVAHRSHVINMLDGDALRRVVELEKPHYIVPEIEAIATDMLIQLEEEGLNVVPCARATKLTMNREGIRRLAAEELQLPTSTYRFADSKSLFREAVAAIGYPCIVKPVMSSSGKGQTFIRSAEQLAQAWEYAQQGGRAGAGRVIVEGVVKFDFEITLLTVSAVDGVHFCAPVGHRQEDGDYRESWQPQQMSPLALERAQEIARKVVLALGGYGLFGVELFVCGDEVIFSEVSPRPHDTGMVTLISQDLSEFALHVRAFLGLPVGGIRQYGPAASAVILPQLTSQNVTFDNVQNAVGADLQIRLFGKPEIDGSRRLGVVLATSESVVDAIERAKHAAGQVKVQG.

N(1)-(5-phospho-beta-D-ribosyl)glycinamide-binding positions include 22–23 (EL) and Glu82. Residues Arg114, Lys155, 160-165 (SSGKGQ), 195-198 (EGVV), and Glu203 each bind ATP. The 190-residue stretch at 119–308 (RLAAEELQLP…EFALHVRAFL (190 aa)) folds into the ATP-grasp domain. Mg(2+) is bound by residues Glu267 and Glu279. N(1)-(5-phospho-beta-D-ribosyl)glycinamide contacts are provided by residues Asp286, Lys355, and 362-363 (RR).

The protein belongs to the PurK/PurT family. As to quaternary structure, homodimer.

It carries out the reaction N(1)-(5-phospho-beta-D-ribosyl)glycinamide + formate + ATP = N(2)-formyl-N(1)-(5-phospho-beta-D-ribosyl)glycinamide + ADP + phosphate + H(+). It participates in purine metabolism; IMP biosynthesis via de novo pathway; N(2)-formyl-N(1)-(5-phospho-D-ribosyl)glycinamide from N(1)-(5-phospho-D-ribosyl)glycinamide (formate route): step 1/1. Involved in the de novo purine biosynthesis. Catalyzes the transfer of formate to 5-phospho-ribosyl-glycinamide (GAR), producing 5-phospho-ribosyl-N-formylglycinamide (FGAR). Formate is provided by PurU via hydrolysis of 10-formyl-tetrahydrofolate. The polypeptide is Formate-dependent phosphoribosylglycinamide formyltransferase (Shigella flexneri).